A 206-amino-acid chain; its full sequence is MASSNFLVLLLFALFAIPQGLANYEKPPVYQPPVYKPPVEKPPVYKPPVEKPPVYKPPVEKPPVYKPPVYKPPVYKPPVVKPPVYKPPVYKPPVYKPPVYKPPVEKPPVYKPPVYKPPVVKPPVYKPPVYKPPVEKPPVYKPPVVKPPVYKPPVYKPPVVKPPVYKPPVYKPPVYKPPVEKPPVYKPPVYKPPVEKPPVYGPPHHP.

The N-terminal stretch at 1-22 (MASSNFLVLLLFALFAIPQGLA) is a signal peptide. Tandem repeats lie at residues 32 to 36 (PPVYK), 37 to 41 (PPVEK), 42 to 46 (PPVYK), 47 to 51 (PPVEK), 52 to 56 (PPVYK), 57 to 61 (PPVEK), 62 to 66 (PPVYK), 67 to 71 (PPVYK), 72 to 76 (PPVYK), 77 to 81 (PPVVK), 82 to 86 (PPVYK), 87 to 91 (PPVYK), 92 to 96 (PPVYK), 97 to 101 (PPVYK), 102 to 106 (PPVEK), 107 to 111 (PPVYK), 112 to 116 (PPVYK), 117 to 121 (PPVVK), 122 to 126 (PPVYK), 127 to 131 (PPVYK), 132 to 136 (PPVEK), 137 to 141 (PPVYK), 142 to 146 (PPVVK), 147 to 151 (PPVYK), 152 to 156 (PPVYK), 157 to 161 (PPVVK), 162 to 166 (PPVYK), 167 to 171 (PPVYK), 172 to 176 (PPVYK), 177 to 181 (PPVEK), 182 to 186 (PPVYK), 187 to 191 (PPVYK), and 192 to 196 (PPVEK). Residues 32-201 (PPVYKPPVEK…PPVEKPPVYG (170 aa)) are 34 X 5 AA approximate tandem repeats of P-P-V-[EVY]-K. Residues 51 to 84 (KPPVYKPPVEKPPVYKPPVYKPPVYKPPVVKPPV) are disordered. Residues 132 to 206 (PPVEKPPVYK…PPVYGPPHHP (75 aa)) form a disordered region. The stretch at 197–201 (PPVYG) is one 34; approximate repeat.

It belongs to the plant proline-rich protein superfamily. ENOD12 family. Expressed in hypocotyls, roots and mature root nodules.

It is found in the secreted. It localises to the cell wall. In terms of biological role, this is a developmentally regulated putative cell wall protein. The chain is Repetitive proline-rich cell wall protein 1 (PRP1) from Medicago truncatula (Barrel medic).